Reading from the N-terminus, the 85-residue chain is MAHKKAGGSTRNGRDSESKRLGVKMYGGQVIKAGNIIVRQRGTEFHPGFGVGMGKDHTLFAKIEGVVKFEVKGAFGRRYVSVVQA.

Positions 1–21 are disordered; sequence MAHKKAGGSTRNGRDSESKRL.

It belongs to the bacterial ribosomal protein bL27 family.

The polypeptide is Large ribosomal subunit protein bL27 (Ectopseudomonas mendocina (strain ymp) (Pseudomonas mendocina)).